A 388-amino-acid chain; its full sequence is MKHSVLAGLFATGALAQGGAWQQCGGVGFSGSTSCVSGYTCVYLNDWYSQCQPQPTTLRTTTTPGATSTTRSAPAATSTTPAKGKFKWFGINQSCAEFGKGEYPGLWGKHFTFPSTSSIQTHINDGFNMFRVAFSMERLAPNQLNAAFDANYLRNLTETVNFITGKGKYAMLDPHNFGRYYERIITDKAAFASFFTKLATHFASNPLVVFDTNNEYHDMDQQLVFDLNQAAIDAIRAAGATSQYIMVEGNSWTGAWTWNVTNNNLAALRDPENKLVYQMHQYLDSDGSGTSTACVSTQVGLQRVIGATNWLRQNGKVGLLGEFAGGANSVCQQAIEGMLTHLQENSDVWTGALWWAGGPWWGDYIYSFEPPSGIGYTYYNSLLKKYVP.

The signal sequence occupies residues 1 to 16 (MKHSVLAGLFATGALA). Positions 17–52 (QGGAWQQCGGVGFSGSTSCVSGYTCVYLNDWYSQCQ) constitute a CBM1 domain. Intrachain disulfides connect Cys24–Cys41 and Cys35–Cys51. The tract at residues 53-91 (PQPTTLRTTTTPGATSTTRSAPAATSTTPAKGKFKWFGI) is linker. Residues 56–81 (TTLRTTTTPGATSTTRSAPAATSTTP) are disordered. N-linked (GlcNAc...) asparagine glycosylation is found at Asn92 and Asn155. The catalytic stretch occupies residues 92–388 (NQSCAEFGKG…YNSLLKKYVP (297 aa)). Residue Glu215 is the Proton donor of the active site. Asn259 is a glycosylation site (N-linked (GlcNAc...) asparagine). Glu322 acts as the Nucleophile in catalysis.

It belongs to the glycosyl hydrolase 5 (cellulase A) family.

The enzyme catalyses Endohydrolysis of (1-&gt;4)-beta-D-glucosidic linkages in cellulose, lichenin and cereal beta-D-glucans.. This is Endoglucanase 3 (CMC3) from Humicola insolens (Soft-rot fungus).